The primary structure comprises 554 residues: Potassium-transporting ATPase potassium-binding subunit (554 aa).

10 consecutive transmembrane segments (helical) span residues 1-21, 60-80, 131-151, 174-194, 246-266, 279-299, 375-395, 412-432, 481-501, and 525-545; these read MSPV…LALA, PAYL…LYVL, GLAV…VALV, VRVL…CGAI, PGPF…FALT, GYAI…LMMW, GLYG…LMVG, FAAC…AAAM, IGIV…ALAG, and GLLV…ALAL.

This sequence belongs to the KdpA family. As to quaternary structure, the system is composed of three essential subunits: KdpA, KdpB and KdpC.

It localises to the cell membrane. Its function is as follows. Part of the high-affinity ATP-driven potassium transport (or Kdp) system, which catalyzes the hydrolysis of ATP coupled with the electrogenic transport of potassium into the cytoplasm. This subunit binds the extracellular potassium ions and delivers the ions to the membrane domain of KdpB through an intramembrane tunnel. The protein is Potassium-transporting ATPase potassium-binding subunit of Streptomyces avermitilis (strain ATCC 31267 / DSM 46492 / JCM 5070 / NBRC 14893 / NCIMB 12804 / NRRL 8165 / MA-4680).